We begin with the raw amino-acid sequence, 345 residues long: uncharacterized protein (345 aa).

PDZ GRASP-type domains lie at 27 to 112 (CGFR…WASI) and 118 to 207 (AIWH…HGVL). Residues 27–223 (CGFRVLKVEN…LSGPPPQPGD (197 aa)) form a GRASP region. The segment at 229-345 (PMLGGPDHKV…APQNEELVKN (117 aa)) is disordered. Basic and acidic residues predominate over residues 297-308 (KLSRELDHKTKD). Polar residues-rich tracts occupy residues 309-318 (ASSTNDSQTT) and 328-338 (VNSTNDESAPQ).

Its subcellular location is the golgi apparatus membrane. This is an uncharacterized protein from Schizosaccharomyces pombe (strain 972 / ATCC 24843) (Fission yeast).